A 96-amino-acid polypeptide reads, in one-letter code: Large ribosomal subunit protein uL23 (96 aa).

The protein belongs to the universal ribosomal protein uL23 family. As to quaternary structure, part of the 50S ribosomal subunit. Contacts protein L29, and trigger factor when it is bound to the ribosome.

In terms of biological role, one of the early assembly proteins it binds 23S rRNA. One of the proteins that surrounds the polypeptide exit tunnel on the outside of the ribosome. Forms the main docking site for trigger factor binding to the ribosome. In Oleidesulfovibrio alaskensis (strain ATCC BAA-1058 / DSM 17464 / G20) (Desulfovibrio alaskensis), this protein is Large ribosomal subunit protein uL23.